We begin with the raw amino-acid sequence, 1432 residues long: Superkiller protein 3 (1432 aa).

2 TPR repeats span residues 4–37 (IKQL…DPDN) and 47–80 (ALSS…VPDN). The tract at residues 339-397 (SANKPPEGHKKTEKETDIKDVDETNEDEVKDRVEDEVKDRVEDEVKDQDEEAKEDEEED) is disordered. The span at 344–381 (PEGHKKTEKETDIKDVDETNEDEVKDRVEDEVKDRVED) shows a compositional bias: basic and acidic residues. A compositionally biased stretch (acidic residues) spans 382-397 (EVKDQDEEAKEDEEED). TPR repeat units lie at residues 425–458 (ILAH…IAYN), 471–507 (REFS…DFSN), 508–541 (IQAK…SPNN), 627–661 (APGF…DAGD), 702–735 (NWPF…DPND), 736–769 (VESW…RPSH), 945–985 (ASYW…QSNT), 987–1018 (ETWI…EPKA), and 1226–1259 (ISNH…SKDS).

Belongs to the SKI3 family. As to quaternary structure, component of the SKI complex composed of at least SKI2, SKI3 and SKI8. The SKI complex interacts with SKI7, which makes the link between the SKI complex and the exosome in order to perform mRNA degradation.

It localises to the cytoplasm. The protein resides in the nucleus. Its function is as follows. Component of the SKI complex involved in 3'-mRNA degradation pathway. Represses dsRNA virus propagation by specifically blocking translation of viral mRNAs, perhaps recognizing the absence of CAP or poly(A). Essential for cell growth only in the presence of M1 replicon. This Saccharomyces cerevisiae (strain ATCC 204508 / S288c) (Baker's yeast) protein is Superkiller protein 3 (SKI3).